A 640-amino-acid polypeptide reads, in one-letter code: Threonine--tRNA ligase (640 aa).

Positions 1–61 (MPIITLPDGS…TNDAEIQIIT (61 aa)) constitute a TGS domain. Residues 242-533 (DHRKLGKKLS…LIENYSGNLP (292 aa)) form a catalytic region. 3 residues coordinate Zn(2+): Cys333, His384, and His510.

The protein belongs to the class-II aminoacyl-tRNA synthetase family. Homodimer. Zn(2+) is required as a cofactor.

Its subcellular location is the cytoplasm. It carries out the reaction tRNA(Thr) + L-threonine + ATP = L-threonyl-tRNA(Thr) + AMP + diphosphate + H(+). Functionally, catalyzes the attachment of threonine to tRNA(Thr) in a two-step reaction: L-threonine is first activated by ATP to form Thr-AMP and then transferred to the acceptor end of tRNA(Thr). Also edits incorrectly charged L-seryl-tRNA(Thr). The chain is Threonine--tRNA ligase from Prochlorococcus marinus (strain NATL1A).